The sequence spans 221 residues: Glutathione peroxidase 6 (221 aa).

The first 19 residues, 1–19 (MTQQFWGPCLFSLFMAVLA), serve as a signal peptide directing secretion. Cysteine 73 is a catalytic residue.

Belongs to the glutathione peroxidase family. In terms of tissue distribution, expressed in the Bowman glands.

Its subcellular location is the secreted. It carries out the reaction 2 glutathione + H2O2 = glutathione disulfide + 2 H2O. The polypeptide is Glutathione peroxidase 6 (Gpx6) (Rattus norvegicus (Rat)).